The primary structure comprises 297 residues: MLIFQAFIQSPGETFLNLGFLTIRWYGFLISVSVIIGLFVSKKLAKARNINPLYISEILPSLIIFSIIGARAYYVIFEWRQYSGENLFTSLELFNNTIQIPSFLAVWEGGIAIHGGLIGGLLSIIYFCKSKNIHLKTFIDILIPSIILGQSIGRWGNFFNNEAFGVPTNLPWKLFIPIQNRPLEFINYEFFHPTFLYESLWNFLIFILLIFVFNKQNKTDFFRPGFISCLYLISYSFGRFWIEGLRTDPLCIGGLPPFCSGGIRMAQFISIFLFSSGLIGIFFLRLRTYSCKNRKNG.

The next 4 helical transmembrane spans lie at 20-40 (FLTIRWYGFLISVSVIIGLFV), 50-70 (INPLYISEILPSLIIFSIIGA), 105-125 (AVWEGGIAIHGGLIGGLLSII), and 133-153 (IHLKTFIDILIPSIILGQSIG). Arginine 154 contributes to the a 1,2-diacyl-sn-glycero-3-phospho-(1'-sn-glycerol) binding site. 3 helical membrane passes run 193–213 (PTFLYESLWNFLIFILLIFVF), 225–245 (GFISCLYLISYSFGRFWIEGL), and 266–286 (AQFISIFLFSSGLIGIFFLRL).

Belongs to the Lgt family.

Its subcellular location is the cell inner membrane. It carries out the reaction L-cysteinyl-[prolipoprotein] + a 1,2-diacyl-sn-glycero-3-phospho-(1'-sn-glycerol) = an S-1,2-diacyl-sn-glyceryl-L-cysteinyl-[prolipoprotein] + sn-glycerol 1-phosphate + H(+). The protein operates within protein modification; lipoprotein biosynthesis (diacylglyceryl transfer). Its function is as follows. Catalyzes the transfer of the diacylglyceryl group from phosphatidylglycerol to the sulfhydryl group of the N-terminal cysteine of a prolipoprotein, the first step in the formation of mature lipoproteins. This Prochlorococcus marinus (strain MIT 9312) protein is Phosphatidylglycerol--prolipoprotein diacylglyceryl transferase.